Consider the following 1606-residue polypeptide: E3 ubiquitin-protein ligase HECW1 (1606 aa).

The region spanning 182–318 (SAAPIFKSIG…LERHAIGDRV (137 aa)) is the C2 domain. Disordered stretches follow at residues 349-418 (DDEE…PAEE), 459-538 (AEQL…CSLP), 566-672 (LLHS…SCEG), and 730-815 (STVF…SQLP). Residues 354–373 (SLSTEPESAQIQDSPMNNLM) are compositionally biased toward polar residues. The segment covering 380–392 (PRSEAPESSESWK) has biased composition (basic and acidic residues). Composition is skewed to acidic residues over residues 500–511 (EEEEKEQEEEGD) and 579–588 (AEEEDGAEEE). Basic and acidic residues predominate over residues 589 to 600 (STLKDSSEKDGL). Acidic residues predominate over residues 612 to 621 (ALEEDREEPE). Composition is skewed to polar residues over residues 651 to 663 (HPSTGSESDSSPR), 751 to 765 (DSMQSPELDPESTNG), and 806 to 815 (HNSQPVSQLP). In terms of domain architecture, WW 1 spans 829-862 (EPLPPNWEARIDSHGRVFYVDHVNRTTTWQRPTA). A coiled-coil region spans residues 870-901 (RRSGSIQQMEQLNRRYQNIQRTIATERSEEDS). 3 positions are modified to phosphoserine: Ser874, Ser937, and Ser939. Positions 894 to 938 (TERSEEDSGSQSCEQAPAGGGGGGGSDSEAESSQSSLDLRREGSL) are disordered. Residues 1018-1051 (LELPRGWEIKTDQQGKSFFVDHNSRATTFIDPRI) form the WW 2 domain. In terms of domain architecture, HECT spans 1271–1606 (SRKELQRNKL…VEETSTFGLE (336 aa)). Cys1574 serves as the catalytic Glycyl thioester intermediate.

In terms of assembly, interacts with DVL1 and SSR3. Also interacts with mutant SOD1. As to expression, predominantly expressed in neurons of adult and fetal brain. Weakly expressed in the kidney.

It is found in the cytoplasm. The enzyme catalyses S-ubiquitinyl-[E2 ubiquitin-conjugating enzyme]-L-cysteine + [acceptor protein]-L-lysine = [E2 ubiquitin-conjugating enzyme]-L-cysteine + N(6)-ubiquitinyl-[acceptor protein]-L-lysine.. The protein operates within protein modification; protein ubiquitination. In terms of biological role, E3 ubiquitin-protein ligase that mediates ubiquitination and subsequent degradation of DVL1. Also targets the mutant SOD1 protein involved in familial amyotrophic lateral sclerosis (FALS). Forms cytotoxic aggregates with DVL1, SSR3 and mutant SOD1 that lead to motor neuron death in FALS. This chain is E3 ubiquitin-protein ligase HECW1 (HECW1), found in Homo sapiens (Human).